Here is a 158-residue protein sequence, read N- to C-terminus: Na(+)/H(+) antiporter subunit E (158 aa).

2 helical membrane passes run 21 to 41 and 51 to 71; these read SPSA…LFFF and LWKL…LYLA.

Belongs to the CPA3 antiporters (TC 2.A.63) subunit E family. In terms of assembly, forms a heterooligomeric complex that consists of seven subunits: MrpA, MrpB, MrpC, MrpD, MrpE, MrpF and MrpG.

It localises to the cell membrane. Mrp complex is a Na(+)/H(+) antiporter that is considered to be the major Na(+) excretion system in B.subtilis. Has a major role in Na(+) resistance and a minor role in Na(+)- and K(+)-dependent pH homeostasis as compared to TetB. MrpA may be the actual Na(+)/H(+) antiporter, although the six other Mrp proteins are all required for Na(+)/H(+) antiport activity and Na(+) resistance. MrpA is required for initiation of sporulation when external Na(+) concentration increases. Also transports Li(+) but not K(+), Ca(2+) or Mg(2+). The polypeptide is Na(+)/H(+) antiporter subunit E (mrpE) (Bacillus subtilis (strain 168)).